Here is a 142-residue protein sequence, read N- to C-terminus: Large-conductance mechanosensitive channel (142 aa).

Transmembrane regions (helical) follow at residues 19–39, 41–61, and 78–98; these read VGIIIGAAFTAIVSSLVADLV, PFIALFTGGIDFSGWFYALDG, and FAFGNFIMAVINFLIIAFVVF.

It belongs to the MscL family. As to quaternary structure, homopentamer.

Its subcellular location is the cell inner membrane. Channel that opens in response to stretch forces in the membrane lipid bilayer. May participate in the regulation of osmotic pressure changes within the cell. The polypeptide is Large-conductance mechanosensitive channel (Roseobacter denitrificans (strain ATCC 33942 / OCh 114) (Erythrobacter sp. (strain OCh 114))).